The chain runs to 290 residues: Nucleotide-binding protein FN1089 (290 aa).

11–18 (GLSGAGKT) serves as a coordination point for ATP. 56–59 (DIRT) contributes to the GTP binding site.

It belongs to the RapZ-like family.

In terms of biological role, displays ATPase and GTPase activities. The chain is Nucleotide-binding protein FN1089 from Fusobacterium nucleatum subsp. nucleatum (strain ATCC 25586 / DSM 15643 / BCRC 10681 / CIP 101130 / JCM 8532 / KCTC 2640 / LMG 13131 / VPI 4355).